Reading from the N-terminus, the 840-residue chain is Phosphatidylinositol-3-phosphatase myotubularin-1 (840 aa).

Positions 1–28 (MTPPRPPSGRVRSLRDYSSESEKMDGTG) are disordered. Basic and acidic residues predominate over residues 13 to 25 (SLRDYSSESEKMD). One can recognise a GRAM domain in the interval 45–112 (GSFSNLSCLL…ATIEKFNKMV (68 aa)). The region spanning 199-650 (GKSSIRASMD…LAPTLWPQFH (452 aa)) is the Myotubularin phosphatase domain. Residues 332-335 (NGAM), 357-358 (NI), 443-449 (CSDGWDR), and arginine 489 each bind substrate. The active-site Phosphocysteine intermediate is the cysteine 443. The tract at residues 506 to 535 (QSSSAGSFPSSPVRQSSGSAASQSSSSSHG) is disordered. Residues 507–535 (SSSAGSFPSSPVRQSSGSAASQSSSSSHG) are compositionally biased toward low complexity. Positions 666 to 734 (VQCRAMTVKY…AALTRAVQSL (69 aa)) form a coiled coil. The tract at residues 745 to 771 (VEDDPRSSLENNPRRRNRHGNNSDVSV) is disordered.

It belongs to the protein-tyrosine phosphatase family. Non-receptor class myotubularin subfamily. In terms of tissue distribution, mostly expressed in siliques and leaves (including hydathodes), and, to a lower extent, in flowers and roots.

It localises to the cytoplasm. Its subcellular location is the endosome membrane. It catalyses the reaction a 1,2-diacyl-sn-glycero-3-phospho-(1D-myo-inositol-3-phosphate) + H2O = a 1,2-diacyl-sn-glycero-3-phospho-(1D-myo-inositol) + phosphate. The enzyme catalyses a 1,2-diacyl-sn-glycero-3-phospho-(1D-myo-inositol-3,5-bisphosphate) + H2O = a 1,2-diacyl-sn-glycero-3-phospho-(1D-myo-inositol-5-phosphate) + phosphate. Phosphatase with phosphoinositide 3'-phosphatase activity that can use phosphatidylinositol-3-phosphate (PtdIns3P) and phosphatidylinositol-3,5-diphosphate (PtdIns3,5P(2)) as substrates and produces phosphatidylinositol-5-phosphate (PtdIns5P); participates in pathway(s) that transfer gene regulatory signals to the nucleus. Required for recovery after water deprivation, via the accumulation of PtdIns5P upon dehydration; high PtdIns5P levels mediate ATX1 cytoplasmic localization, thus down-regulating the expression of ATX1-dependent genes. Confers sensitivity to soil-water-deficit stress. The chain is Phosphatidylinositol-3-phosphatase myotubularin-1 (MTM1) from Arabidopsis thaliana (Mouse-ear cress).